The following is a 365-amino-acid chain: Aminomethyltransferase (365 aa).

It belongs to the GcvT family. In terms of assembly, the glycine cleavage system is composed of four proteins: P, T, L and H.

It carries out the reaction N(6)-[(R)-S(8)-aminomethyldihydrolipoyl]-L-lysyl-[protein] + (6S)-5,6,7,8-tetrahydrofolate = N(6)-[(R)-dihydrolipoyl]-L-lysyl-[protein] + (6R)-5,10-methylene-5,6,7,8-tetrahydrofolate + NH4(+). The glycine cleavage system catalyzes the degradation of glycine. This is Aminomethyltransferase from Aeromonas hydrophila subsp. hydrophila (strain ATCC 7966 / DSM 30187 / BCRC 13018 / CCUG 14551 / JCM 1027 / KCTC 2358 / NCIMB 9240 / NCTC 8049).